Reading from the N-terminus, the 350-residue chain is Uroporphyrinogen decarboxylase (350 aa).

Residues Arg-28–Arg-32, Asp-78, Tyr-155, Ser-210, and His-325 contribute to the substrate site.

This sequence belongs to the uroporphyrinogen decarboxylase family. As to quaternary structure, homodimer.

It is found in the cytoplasm. It carries out the reaction uroporphyrinogen III + 4 H(+) = coproporphyrinogen III + 4 CO2. The protein operates within porphyrin-containing compound metabolism; protoporphyrin-IX biosynthesis; coproporphyrinogen-III from 5-aminolevulinate: step 4/4. Catalyzes the decarboxylation of four acetate groups of uroporphyrinogen-III to yield coproporphyrinogen-III. The sequence is that of Uroporphyrinogen decarboxylase from Picosynechococcus sp. (strain ATCC 27264 / PCC 7002 / PR-6) (Agmenellum quadruplicatum).